Reading from the N-terminus, the 432-residue chain is Alcohol acyltransferase 9 (432 aa).

Residues histidine 156 and aspartate 379 each act as proton acceptor in the active site.

It belongs to the plant acyltransferase family.

It carries out the reaction 2-(methylsulfanyl)acetyl-CoA + butan-1-ol = butyl 2-(methylsulfanyl)acetate + CoA. The catalysed reaction is ethanol + acetyl-CoA = ethyl acetate + CoA. The enzyme catalyses butan-1-ol + acetyl-CoA = butyl acetate + CoA. It catalyses the reaction butan-1-ol + propanoyl-CoA = butyl propanoate + CoA. Involved in the biosynthesis of volatile esters which confer kiwifruit flavor. Alcohol acyl transferase that can use a wide range of alcohols as substrate to produce esters. Exhibits acetyl-CoA:alcohol O-acyltransferase activity. The protein is Alcohol acyltransferase 9 of Actinidia chinensis var. chinensis (Chinese soft-hair kiwi).